Consider the following 299-residue polypeptide: DNA-binding transcriptional activator HetR (299 aa).

The DNA-binding domain stretch occupies residues 1-98 (MSNDIDLIKR…GKLLKTLGSQ (98 aa)). Residues 34–40 (RHGAFLD) and 60–76 (NLRMTGHLHHLEPKRVK) contribute to the DNA site. Residues 99-216 (EPRYLIQFPY…FYALTRPFYA (118 aa)) are flap domain. Ser152 is a catalytic residue. Position 179–181 (179–181 (SEA)) interacts with DNA. The hood domain stretch occupies residues 217–299 (PADDQERTYI…LQMVFGRKED (83 aa)).

The protein belongs to the peptidase S48 family. As to quaternary structure, upon expression in E.coli most protein is monomeric, although varying amounts of homodimer can be seen. Homodimer; disulfide-linked. Homodimer. Binds the 6 residue C-terminal peptide of PatS; one peptide binds to each subunit. In bacterial two-hybrid assays interacts robustly with itself, Alr2902 and Alr3234 and more weakly with Als1930. In terms of processing, probably autodegrades.

Protease activity is inhibited by PMSF, suggesting this is a serine protease. Functionally, controls heterocyst differentiation. Dimerization is required for DNA-binding. Has both a protease and a DNA-binding activity. In terms of biological role, controls heterocyst differentiation; increased expression leads to more heterocysts than usual. Has protease activity. Binds the promoter regions of hetR, hepA and patS and is required for their expression. Dimerization is required for DNA-binding, DNA-binding is inhibited by the PatS6 peptide. Binds the inverted repeat 5'-GTAGGCGAGGGGTCTAACCCCTCATTACC-3' found in the hetP promoter, required for expression of hetP. This is DNA-binding transcriptional activator HetR from Nostoc sp. (strain PCC 7120 / SAG 25.82 / UTEX 2576).